A 73-amino-acid polypeptide reads, in one-letter code: DNA-directed RNA polymerase subunit omega (73 aa).

It belongs to the RNA polymerase subunit omega family. In terms of assembly, the RNAP catalytic core consists of 2 alpha, 1 beta, 1 beta' and 1 omega subunit. When a sigma factor is associated with the core the holoenzyme is formed, which can initiate transcription.

The catalysed reaction is RNA(n) + a ribonucleoside 5'-triphosphate = RNA(n+1) + diphosphate. In terms of biological role, promotes RNA polymerase assembly. Latches the N- and C-terminal regions of the beta' subunit thereby facilitating its interaction with the beta and alpha subunits. This is DNA-directed RNA polymerase subunit omega from Oleidesulfovibrio alaskensis (strain ATCC BAA-1058 / DSM 17464 / G20) (Desulfovibrio alaskensis).